The sequence spans 81 residues: ATP synthase subunit c, chloroplastic (81 aa).

The next 2 membrane-spanning stretches (helical) occupy residues 3-23 (PLISAASVIAAGLAVGLASIG) and 57-77 (LAFMEALTIYGLVVALALLFA).

The protein belongs to the ATPase C chain family. F-type ATPases have 2 components, F(1) - the catalytic core - and F(0) - the membrane proton channel. F(1) has five subunits: alpha(3), beta(3), gamma(1), delta(1), epsilon(1). F(0) has four main subunits: a(1), b(1), b'(1) and c(10-14). The alpha and beta chains form an alternating ring which encloses part of the gamma chain. F(1) is attached to F(0) by a central stalk formed by the gamma and epsilon chains, while a peripheral stalk is formed by the delta, b and b' chains.

It localises to the plastid. The protein resides in the chloroplast thylakoid membrane. In terms of biological role, f(1)F(0) ATP synthase produces ATP from ADP in the presence of a proton or sodium gradient. F-type ATPases consist of two structural domains, F(1) containing the extramembraneous catalytic core and F(0) containing the membrane proton channel, linked together by a central stalk and a peripheral stalk. During catalysis, ATP synthesis in the catalytic domain of F(1) is coupled via a rotary mechanism of the central stalk subunits to proton translocation. Functionally, key component of the F(0) channel; it plays a direct role in translocation across the membrane. A homomeric c-ring of between 10-14 subunits forms the central stalk rotor element with the F(1) delta and epsilon subunits. The sequence is that of ATP synthase subunit c, chloroplastic from Acorus calamus var. americanus (American sweet flag).